Reading from the N-terminus, the 260-residue chain is 5'-nucleotidase SurE (260 aa).

Asp10, Asp11, Ser41, and Asn95 together coordinate a divalent metal cation.

This sequence belongs to the SurE nucleotidase family. A divalent metal cation serves as cofactor.

It is found in the cytoplasm. The catalysed reaction is a ribonucleoside 5'-phosphate + H2O = a ribonucleoside + phosphate. Functionally, nucleotidase that shows phosphatase activity on nucleoside 5'-monophosphates. The protein is 5'-nucleotidase SurE of Methanoregula boonei (strain DSM 21154 / JCM 14090 / 6A8).